We begin with the raw amino-acid sequence, 418 residues long: Multidrug resistance protein MdtG (418 aa).

The next 11 membrane-spanning stretches (helical) occupy residues Ile19 to Val39, Leu56 to Ala76, Leu90 to Ile110, Ala113 to Ile133, Thr144 to Ala164, Pro171 to Ile191, Leu222 to Leu242, Val251 to Ile271, Ile288 to Thr308, Phe317 to Asn337, and Ala376 to Leu396.

This sequence belongs to the major facilitator superfamily. DHA1 family. MdtG (TC 2.A.1.2.20) subfamily.

It localises to the cell inner membrane. The protein is Multidrug resistance protein MdtG of Enterobacter lignolyticus (strain SCF1).